We begin with the raw amino-acid sequence, 967 residues long: MPTQSVDSVKAVRVRPFSQREKNSGSKCVISMHSRTTTTTQDPKNPEHVKTFTFDLAYWSHNGFQRDKDGVLISADPSRKFAGQRDVFHDLGRGILDSAWQGYNATLLAYGQTGSGKSYSMIGFGCKQGIIPTVCEELFRAIENQGRNQEHQVMFSMLEIYKEIIRDLLSRTKKPGGLRIREDQQLGFYVEGLKSVPCENYAQIERLMEQGTKIRTTASTNMNASSSRSHLVITIQFKQVFLDRDLTKQSSINLVDLARSERQKSSGSEGDRLREGSCVNLSLTNLGSVISVLADAAMGKKVLHIPYRDSVLTKLLQSALGGNSRTALVAAVSPADICYEETLSTLRYAERERKIRNRAVANTWTLMRKSRAENSKLLPMMTFPHLLNLSEDPQLTRVLKYFIQAGTQPAPCPRPALSPPHPALRISDKHASFTNADGKVTVTPHSKCKVAVNGVPITTRTKLQHLDRLILGSNSTYLYVGFPSEWGSEDLSRFDYDFFQLERAAAEGASADKLGAADGGDGKAGPSVLAAFQDYIKLMPLVSEANQMSEEPKKGLNMELKVKNLASSDSRGYDLQKEVLVKVTHHGSHEVWIWSKAKFINRKFLMQELYQRFLDGDHGPVARDDDPFWDPVEVVRLGSAHIWLQSLAYCMKLEEQVEFLNCDGLEEAVLHTCIAPCSPTGQTHGEEDVVIDPLELLGKRMDFQIHIVRCLGVNWMKEDAKRGTQIGYRIYDLPNTIYTKPVWKSVNPQIEETVQFAALTASQEFLNYLRTNALIVDLWGLQEGCTELSCSQLGLMVTGEGHILVDTKKISTVKDISQAASNQIPELYLKLLKLEQETEPLRNINRALREENVLLKASLAKTASGQAPKPSNTLKISGMTAQLPSAGEMSQMCTQQAGSDRELAKALKVFYQSMNTARGQLFRLRRHQPPEVDQMLRPFIHQRSQMFKDLGDLRESSLWTLKMTLLL.

In terms of domain architecture, Kinesin motor spans 7–355; the sequence is DSVKAVRVRP…LRYAERERKI (349 aa). Residue 111–118 coordinates ATP; sequence GQTGSGKS. The FHA domain occupies 410-472; that stretch reads APCPRPALSP…LQHLDRLILG (63 aa). A coiled-coil region spans residues 822 to 851; that stretch reads NQIPELYLKLLKLEQETEPLRNINRALREE.

Belongs to the TRAFAC class myosin-kinesin ATPase superfamily. Kinesin family.

It is found in the mitochondrion membrane. Its function is as follows. Microtubule-dependent motor protein required for mitochondrion morphology and transport of mitochondria in neuronal cells. In Homo sapiens (Human), this protein is Kinesin-like protein KIF28P (KIF28P).